We begin with the raw amino-acid sequence, 213 residues long: Octanoyltransferase (213 aa).

Positions 32–207 constitute a BPL/LPL catalytic domain; the sequence is ENSHDEIWLV…NILALLNNPP (176 aa). Substrate contacts are provided by residues 71-78, 138-140, and 151-153; these read RGGQVTYH, SLG, and GLA. The active-site Acyl-thioester intermediate is the Cys169.

Belongs to the LipB family.

The protein resides in the cytoplasm. It catalyses the reaction octanoyl-[ACP] + L-lysyl-[protein] = N(6)-octanoyl-L-lysyl-[protein] + holo-[ACP] + H(+). The protein operates within protein modification; protein lipoylation via endogenous pathway; protein N(6)-(lipoyl)lysine from octanoyl-[acyl-carrier-protein]: step 1/2. In terms of biological role, catalyzes the transfer of endogenously produced octanoic acid from octanoyl-acyl-carrier-protein onto the lipoyl domains of lipoate-dependent enzymes. Lipoyl-ACP can also act as a substrate although octanoyl-ACP is likely to be the physiological substrate. The chain is Octanoyltransferase from Salmonella paratyphi A (strain ATCC 9150 / SARB42).